The following is a 74-amino-acid chain: DNA-directed RNA polymerase subunit omega (74 aa).

This sequence belongs to the RNA polymerase subunit omega family. In terms of assembly, the RNAP catalytic core consists of 2 alpha, 1 beta, 1 beta' and 1 omega subunit. When a sigma factor is associated with the core the holoenzyme is formed, which can initiate transcription.

The catalysed reaction is RNA(n) + a ribonucleoside 5'-triphosphate = RNA(n+1) + diphosphate. Its function is as follows. Promotes RNA polymerase assembly. Latches the N- and C-terminal regions of the beta' subunit thereby facilitating its interaction with the beta and alpha subunits. This chain is DNA-directed RNA polymerase subunit omega, found in Hydrogenovibrio crunogenus (strain DSM 25203 / XCL-2) (Thiomicrospira crunogena).